The chain runs to 166 residues: Probable protein tyrosine phosphatase type IVA A (166 aa).

One can recognise a Tyrosine-protein phosphatase domain in the interval 10 to 164 (NPASLVESST…YKSKKKSSCR (155 aa)). A disulfide bridge connects residues Cys52 and Cys107. The Proton donor role is filled by Asp75. Residue Cys107 is the Phosphocysteine intermediate of the active site. Position 108 to 113 (108 to 113 (VAGLGR)) interacts with phosphate. Position 113 (Arg113) interacts with substrate. Cys163 carries the cysteine methyl ester modification. Residue Cys163 is the site of S-farnesyl cysteine attachment. Residues 164–166 (RIM) constitute a propeptide, removed in mature form.

It belongs to the protein-tyrosine phosphatase family.

The protein resides in the membrane. It carries out the reaction O-phospho-L-tyrosyl-[protein] + H2O = L-tyrosyl-[protein] + phosphate. In Dictyostelium discoideum (Social amoeba), this protein is Probable protein tyrosine phosphatase type IVA A.